A 246-amino-acid polypeptide reads, in one-letter code: Putative F-box/LRR-repeat protein 9 (246 aa).

An F-box domain is found at 18-65 (YRNWAELPPELTSSILLRLGAIEILQNAQRVCKSWRRVCQDPSMWRKI).

The chain is Putative F-box/LRR-repeat protein 9 (FBL9) from Arabidopsis thaliana (Mouse-ear cress).